The chain runs to 279 residues: Thymidylate synthase (279 aa).

133 to 134 (RR) lines the dUMP pocket. The active-site Nucleophile is the Cys-154. DUMP contacts are provided by residues 178–181 (RSND), Asn-189, and 219–221 (HIY). Asp-181 lines the (6R)-5,10-methylene-5,6,7,8-tetrahydrofolate pocket. Ala-278 contributes to the (6R)-5,10-methylene-5,6,7,8-tetrahydrofolate binding site.

This sequence belongs to the thymidylate synthase family. Bacterial-type ThyA subfamily. Homodimer.

The protein resides in the cytoplasm. The catalysed reaction is dUMP + (6R)-5,10-methylene-5,6,7,8-tetrahydrofolate = 7,8-dihydrofolate + dTMP. The protein operates within pyrimidine metabolism; dTTP biosynthesis. In terms of biological role, catalyzes the reductive methylation of 2'-deoxyuridine-5'-monophosphate (dUMP) to 2'-deoxythymidine-5'-monophosphate (dTMP) while utilizing 5,10-methylenetetrahydrofolate (mTHF) as the methyl donor and reductant in the reaction, yielding dihydrofolate (DHF) as a by-product. This enzymatic reaction provides an intracellular de novo source of dTMP, an essential precursor for DNA biosynthesis. In Streptococcus agalactiae serotype Ia (strain ATCC 27591 / A909 / CDC SS700), this protein is Thymidylate synthase.